We begin with the raw amino-acid sequence, 123 residues long: Ribonuclease P protein component 2 (123 aa).

This sequence belongs to the eukaryotic/archaeal RNase P protein component 2 family. Consists of a catalytic RNA component and at least 4 protein subunits.

The enzyme catalyses Endonucleolytic cleavage of RNA, removing 5'-extranucleotides from tRNA precursor.. Its function is as follows. Part of ribonuclease P, a protein complex that generates mature tRNA molecules by cleaving their 5'-ends. This chain is Ribonuclease P protein component 2, found in Aeropyrum pernix (strain ATCC 700893 / DSM 11879 / JCM 9820 / NBRC 100138 / K1).